Here is a 372-residue protein sequence, read N- to C-terminus: Queuine tRNA-ribosyltransferase (372 aa).

Catalysis depends on Asp-92, which acts as the Proton acceptor. Substrate-binding positions include 92-96 (DSGGY), Asp-146, Gln-188, and Gly-215. An RNA binding region spans residues 246 to 252 (GIGSLRE). The active-site Nucleophile is Asp-265. Residues 270–274 (TRLGR) form an RNA binding; important for wobble base 34 recognition region. Zn(2+) is bound by residues Cys-303, Cys-305, Cys-308, and His-334.

Belongs to the queuine tRNA-ribosyltransferase family. In terms of assembly, homodimer. Within each dimer, one monomer is responsible for RNA recognition and catalysis, while the other monomer binds to the replacement base PreQ1. Requires Zn(2+) as cofactor.

It carries out the reaction 7-aminomethyl-7-carbaguanine + guanosine(34) in tRNA = 7-aminomethyl-7-carbaguanosine(34) in tRNA + guanine. The protein operates within tRNA modification; tRNA-queuosine biosynthesis. In terms of biological role, catalyzes the base-exchange of a guanine (G) residue with the queuine precursor 7-aminomethyl-7-deazaguanine (PreQ1) at position 34 (anticodon wobble position) in tRNAs with GU(N) anticodons (tRNA-Asp, -Asn, -His and -Tyr). Catalysis occurs through a double-displacement mechanism. The nucleophile active site attacks the C1' of nucleotide 34 to detach the guanine base from the RNA, forming a covalent enzyme-RNA intermediate. The proton acceptor active site deprotonates the incoming PreQ1, allowing a nucleophilic attack on the C1' of the ribose to form the product. After dissociation, two additional enzymatic reactions on the tRNA convert PreQ1 to queuine (Q), resulting in the hypermodified nucleoside queuosine (7-(((4,5-cis-dihydroxy-2-cyclopenten-1-yl)amino)methyl)-7-deazaguanosine). This chain is Queuine tRNA-ribosyltransferase, found in Prochlorococcus marinus (strain MIT 9215).